The following is a 172-amino-acid chain: uncharacterized protein (172 aa).

Residues 12–172 (IRLRCMEDRD…IAVYERKSYN (161 aa)) enclose the N-acetyltransferase domain.

This is an uncharacterized protein from Bacillus subtilis (strain 168).